The sequence spans 118 residues: Small ribosomal subunit protein mS41 (118 aa).

The N-terminal 24 residues, 1-24, are a transit peptide targeting the mitochondrion; that stretch reads MLRVVAKAQYPAAVRCFSTSHAAF.

Belongs to the mitochondrion-specific ribosomal protein mS41 family.

Its subcellular location is the mitochondrion. Functionally, involved in telomere length regulation. The protein is Small ribosomal subunit protein mS41 (FYV4) of Yarrowia lipolytica (strain CLIB 122 / E 150) (Yeast).